A 403-amino-acid polypeptide reads, in one-letter code: NADH-quinone oxidoreductase subunit D (403 aa).

This sequence belongs to the complex I 49 kDa subunit family. NDH-1 is composed of 14 different subunits. Subunits NuoB, C, D, E, F, and G constitute the peripheral sector of the complex.

It localises to the cell inner membrane. It catalyses the reaction a quinone + NADH + 5 H(+)(in) = a quinol + NAD(+) + 4 H(+)(out). Functionally, NDH-1 shuttles electrons from NADH, via FMN and iron-sulfur (Fe-S) centers, to quinones in the respiratory chain. The immediate electron acceptor for the enzyme in this species is believed to be ubiquinone. Couples the redox reaction to proton translocation (for every two electrons transferred, four hydrogen ions are translocated across the cytoplasmic membrane), and thus conserves the redox energy in a proton gradient. In Erythrobacter litoralis (strain HTCC2594), this protein is NADH-quinone oxidoreductase subunit D.